A 228-amino-acid polypeptide reads, in one-letter code: Pyridoxal phosphate homeostasis protein (228 aa).

Position 35 is an N6-(pyridoxal phosphate)lysine (lysine 35).

Belongs to the pyridoxal phosphate-binding protein YggS/PROSC family.

Its function is as follows. Pyridoxal 5'-phosphate (PLP)-binding protein, which is involved in PLP homeostasis. This is Pyridoxal phosphate homeostasis protein from Aquifex aeolicus (strain VF5).